We begin with the raw amino-acid sequence, 505 residues long: Metal transporter Nramp3.2 (505 aa).

12 helical membrane passes run 50 to 70 (LWLF…PGNL), 78 to 98 (AIAG…GLLV), 127 to 147 (MVLW…EVIG), 159 to 179 (FVPL…FLFL), 187 to 207 (LEAV…WMFA), 233 to 253 (AVGV…SALV), 280 to 300 (ALVI…KGFY), 321 to 341 (YGGG…AAGQ), 369 to 389 (ALIT…VFDT), 400 to 420 (WLNV…LCLV), 439 to 459 (AWLV…DFFF), and 466 to 486 (AFTT…IYLI).

This sequence belongs to the NRAMP (TC 2.A.55) family. As to expression, expressed in roots, stems, buds and leaves.

It is found in the vacuole membrane. The catalysed reaction is Mn(2+)(in) = Mn(2+)(out). It carries out the reaction Fe(2+)(in) = Fe(2+)(out). In terms of biological role, divalent metal transporter. Can transport manganese (Mn) and iron (Fe). Involved in the release of metals stored in the vacuole. In Populus trichocarpa (Western balsam poplar), this protein is Metal transporter Nramp3.2.